The sequence spans 596 residues: Putative terpene synthase 2, chloroplastic (596 aa).

The transit peptide at 1–46 directs the protein to the chloroplast; that stretch reads MATLSMQVSTLSKQVKNLNTFGMGSASKLPMVARRVSTTRLRPICS. Mn(2+)-binding residues include Asp-349 and Asp-353. Residues 349–353 carry the DDXXD motif motif; sequence DDVYD. 2 homodimerization regions span residues 355–361 and 427–464; these read YGTLDEL and EAKW…FTLP. Asp-493 and Glu-501 together coordinate Mn(2+).

Belongs to the terpene synthase family. In terms of assembly, homodimer. Mn(2+) is required as a cofactor. It depends on Mg(2+) as a cofactor.

It is found in the plastid. Its subcellular location is the chloroplast. The protein operates within secondary metabolite biosynthesis; terpenoid biosynthesis. In terms of biological role, putative monoterpene synthase inactive on geranyl diphosphate (GPP). The sequence is that of Putative terpene synthase 2, chloroplastic from Thymus vulgaris (Thyme).